Reading from the N-terminus, the 404-residue chain is Interferon-activable protein 205-A (404 aa).

The 88-residue stretch at 1 to 88 folds into the Pyrin domain; the sequence is MENEYKRLVL…AEILKKERSE (88 aa). Residues 85-198 form a disordered region; that stretch reads ERSEVTEETS…KSQPQNQNIP (114 aa). Composition is skewed to low complexity over residues 102–112 and 122–132; these read ASPATPTSTTS and TSTTQEETSTA. The span at 137–147 shows a compositional bias: basic and acidic residues; sequence GMSEEKTDVKK. Positions 168-185 are enriched in low complexity; it reads QSPISQVSSSASSNIPSA. Residues 186 to 197 are compositionally biased toward polar residues; it reads KNQKSQPQNQNI. The HIN-200 domain maps to 192-392; the sequence is PQNQNIPRGA…CGDHSFVKVT (201 aa).

Belongs to the HIN-200 family.

Its subcellular location is the nucleus. In terms of biological role, may act as a transcriptional regulator in the myeloid lineage. Inhibits cell growth via p53/TP53 and RB1-dependent and independent pathways. The chain is Interferon-activable protein 205-A (Ifi205a) from Mus musculus (Mouse).